We begin with the raw amino-acid sequence, 60 residues long: Metallothionein A (60 aa).

A beta region spans residues 1-28; the sequence is MDPCECSKSGNCNCGGSCTCTNCSCKSC. Residues Cys-4, Cys-6, Cys-12, Cys-14, Cys-18, Cys-20, Cys-23, Cys-25, Cys-28, Cys-32, Cys-33, Cys-35, Cys-36, Cys-40, Cys-43, Cys-47, Cys-49, Cys-54, Cys-58, and Cys-59 each coordinate a divalent metal cation. The segment at 29–60 is alpha; it reads KKSCCPCCPSGCTKCASGCVCKGKTCDTSCCQ.

The protein belongs to the metallothionein superfamily. Type 1 family.

Its function is as follows. Metallothioneins have a high content of cysteine residues that bind various heavy metals. This Parachaenichthys charcoti (Charcot's dragonfish) protein is Metallothionein A (mta).